The sequence spans 485 residues: N-succinylglutamate 5-semialdehyde dehydrogenase (485 aa).

220–225 (GSANTG) contributes to the NAD(+) binding site. Active-site residues include Glu-243 and Cys-278.

It belongs to the aldehyde dehydrogenase family. AstD subfamily.

The enzyme catalyses N-succinyl-L-glutamate 5-semialdehyde + NAD(+) + H2O = N-succinyl-L-glutamate + NADH + 2 H(+). It functions in the pathway amino-acid degradation; L-arginine degradation via AST pathway; L-glutamate and succinate from L-arginine: step 4/5. Catalyzes the NAD-dependent reduction of succinylglutamate semialdehyde into succinylglutamate. The protein is N-succinylglutamate 5-semialdehyde dehydrogenase of Vibrio vulnificus (strain YJ016).